The following is a 236-amino-acid chain: 2-C-methyl-D-erythritol 4-phosphate cytidylyltransferase (236 aa).

Belongs to the IspD/TarI cytidylyltransferase family. IspD subfamily. In terms of assembly, homodimer.

The enzyme catalyses 2-C-methyl-D-erythritol 4-phosphate + CTP + H(+) = 4-CDP-2-C-methyl-D-erythritol + diphosphate. The protein operates within isoprenoid biosynthesis; isopentenyl diphosphate biosynthesis via DXP pathway; isopentenyl diphosphate from 1-deoxy-D-xylulose 5-phosphate: step 2/6. Catalyzes the formation of 4-diphosphocytidyl-2-C-methyl-D-erythritol from CTP and 2-C-methyl-D-erythritol 4-phosphate (MEP). The chain is 2-C-methyl-D-erythritol 4-phosphate cytidylyltransferase from Escherichia coli O127:H6 (strain E2348/69 / EPEC).